The primary structure comprises 51 residues: Sperm protamine P1 (51 aa).

2 cysteine pairs are disulfide-bonded: C7–C15 and C38–C48.

It belongs to the protamine P1 family. In terms of assembly, cross-linked by interchain disulfide bonds around the DNA-helix. Phosphorylated by SRPK1. As to expression, testis.

It is found in the nucleus. The protein localises to the chromosome. Protamines substitute for histones in the chromatin of sperm during the haploid phase of spermatogenesis. They compact sperm DNA into a highly condensed, stable and inactive complex. The chain is Sperm protamine P1 (Prm1) from Rattus norvegicus (Rat).